The sequence spans 1242 residues: Protein STU1 (1242 aa).

Low complexity-rich tracts occupy residues 138 to 156 (LNSS…TATK) and 548 to 567 (AASP…PSSA). Disordered regions lie at residues 138–161 (LNSS…KPHE), 538–612 (KQLE…NPVF), 637–711 (HVET…LGLG), 748–839 (AEHE…NGNI), 853–884 (AFQT…RPEA), and 1077–1111 (HPAP…EKRT). A compositionally biased stretch (basic and acidic residues) spans 574-593 (KKMDLKAMLAERRRAVKEAG). Low complexity-rich tracts occupy residues 640–660 (TSSP…RIRP) and 701–711 (SPSLSPSLGLG). Basic and acidic residues predominate over residues 748-767 (AEHEVDELTLKEGQKTRDDG). Polar residues-rich tracts occupy residues 802 to 815 (QQGN…SGRV), 824 to 837 (ATGT…SRNG), and 856 to 871 (TPLN…SSAI). Over residues 1082 to 1104 (SSSADNSDPMTSALSQLSLSSSK) the composition is skewed to low complexity.

Belongs to the CLASP family. As to quaternary structure, interacts with microtubules.

It is found in the cytoplasm. It localises to the cytoskeleton. The protein resides in the nucleus. The protein localises to the spindle. Functionally, microtubule binding protein that promotes the stabilization of dynamic microtubules. Required for mitotic spindle formation. This is Protein STU1 (STU1) from Cryptococcus neoformans var. neoformans serotype D (strain B-3501A) (Filobasidiella neoformans).